Consider the following 324-residue polypeptide: IDS-like terpene synthase 1 (324 aa).

Mg(2+) is bound by residues aspartate 77 and aspartate 81.

The protein belongs to the FPP/GGPP synthase family. Mg(2+) serves as cofactor.

The catalysed reaction is (2E)-geranyl diphosphate = (E)-beta-ocimene + diphosphate. It catalyses the reaction (2E)-geranyl diphosphate + H2O = linalool + diphosphate. The enzyme catalyses (2E,6E)-farnesyl diphosphate = (3E,6E)-alpha-farnesene + diphosphate. It carries out the reaction (2E,6E,10E)-geranylgeranyl diphosphate = (E,E,E)-alpha-springene + diphosphate. Its function is as follows. Terpene synthase that shows monoterpene synthase activity and produces (E)-beta-ocimene as a major product and linalool as a minor product, using geranyl diphosphate (GPP) as substrate. Also shows sesquiterpene synthase activity as it is able to convert farnesyl diphosphate (FPP) into (E,E)-alpha-farnesene. Finally, TPS1 can convert geranylgeranyl diphosphate into (E,E,E)-alpha-springene. This is IDS-like terpene synthase 1 from Melampsora larici-populina (strain 98AG31 / pathotype 3-4-7) (Poplar leaf rust fungus).